Consider the following 192-residue polypeptide: Pupal cuticle protein (192 aa).

Positions 1-15 (MHLLMSLFGVLAVMQ) are cleaved as a signal peptide. Residues 45–106 (DGNYRYAYET…PVGDHIPKVP (62 aa)) form the Chitin-binding type R&amp;R domain. Over residues 149-163 (QDQTTPRSRPSSTPK) the composition is skewed to polar residues. The disordered stretch occupies residues 149-192 (QDQTTPRSRPSSTPKTIYLTHPPTLSDAPTRRPLRQRQNDSRRR).

Its function is as follows. Component of the cuticle of the pupa of fruit fly. This is Pupal cuticle protein (Pcp) from Drosophila pseudoobscura pseudoobscura (Fruit fly).